The following is a 101-amino-acid chain: MKLFYLLVICALSLAVMADEKPKLILPTPAPPNLPQLVGGGGGNRKDGFGVSVDAHQKVWTSDNGRHSIGVTPGYSQHLGGPYGNSRPDYRIGAGYSYNFG.

A signal peptide spans 1–18 (MKLFYLLVICALSLAVMA). O-linked (GalNAc...) threonine glycans are attached at residues threonine 28 and threonine 72. Position 100 is a phenylalanine amide (phenylalanine 100).

This sequence belongs to the attacin/sarcotoxin-2 family.

Its function is as follows. Has activity against E.coli. This Protophormia terraenovae (Northern blowfly) protein is Diptericin-D.